A 302-amino-acid chain; its full sequence is Bifunctional protein FolD (302 aa).

NADP(+) is bound by residues 165–167, Ser-190, and Ile-231; that span reads GRS.

Belongs to the tetrahydrofolate dehydrogenase/cyclohydrolase family. As to quaternary structure, homodimer.

The enzyme catalyses (6R)-5,10-methylene-5,6,7,8-tetrahydrofolate + NADP(+) = (6R)-5,10-methenyltetrahydrofolate + NADPH. It carries out the reaction (6R)-5,10-methenyltetrahydrofolate + H2O = (6R)-10-formyltetrahydrofolate + H(+). Its pathway is one-carbon metabolism; tetrahydrofolate interconversion. Its function is as follows. Catalyzes the oxidation of 5,10-methylenetetrahydrofolate to 5,10-methenyltetrahydrofolate and then the hydrolysis of 5,10-methenyltetrahydrofolate to 10-formyltetrahydrofolate. This chain is Bifunctional protein FolD, found in Prochlorococcus marinus (strain SARG / CCMP1375 / SS120).